We begin with the raw amino-acid sequence, 87 residues long: Kappa-5-bungarotoxin (87 aa).

A signal peptide spans 1 to 21 (MKTLLLTLVVVTIVCLDLGYT). Disulfide bonds link cysteine 24–cysteine 42, cysteine 35–cysteine 63, cysteine 48–cysteine 52, cysteine 67–cysteine 79, and cysteine 80–cysteine 85.

The protein belongs to the three-finger toxin family. Long-chain subfamily. Kappa-neurotoxin sub-subfamily. In terms of assembly, homo- and heterodimer; non-covalently linked. In terms of tissue distribution, expressed by the venom gland.

The protein resides in the secreted. In terms of biological role, postsynaptic neurotoxin that binds and inhibits neuronal nicotinic acetylcholine receptors (nAChR) with high affinity (IC(50)&lt;100 nM). Is a selective, and slowly reversible antagonist of alpha-3/CHRNA3-containing and some alpha-4/CHRNA4-containing AChRs. The protein is Kappa-5-bungarotoxin of Bungarus multicinctus (Many-banded krait).